The primary structure comprises 630 residues: Terpinolene synthase, chloroplastic (630 aa).

A chloroplast-targeting transit peptide spans 1-52 (MALVSILPLSSKSVLHKSWIVSTYEHKAISRTIPNLGLRGRGKSVTHSLRMS). Aspartate 381, aspartate 385, asparagine 525, and aspartate 533 together coordinate Mg(2+). Residues 381–385 (DDIYD) carry the DDXXD motif motif.

The protein belongs to the terpene synthase family. Tpsd subfamily. Mg(2+) is required as a cofactor. Requires Mn(2+) as cofactor. The cofactor is K(+).

The protein localises to the plastid. It is found in the chloroplast. It carries out the reaction (2E)-geranyl diphosphate = terpinolene + diphosphate. The protein operates within terpene metabolism; oleoresin biosynthesis. Involved in defensive oleoresin formation in conifers in response to insect attack or other injury. Involved in monoterpene (C10) olefins biosynthesis. The sequence is that of Terpinolene synthase, chloroplastic (ag9) from Abies grandis (Grand fir).